A 258-amino-acid polypeptide reads, in one-letter code: Lipoprotein-releasing system ATP-binding protein LolD (258 aa).

Positions 5 to 244 (LQCCQLSKSY…PTSSITDPAN (240 aa)) constitute an ABC transporter domain. ATP is bound at residue 41-48 (GSSGCGKS). A disordered region spans residues 222–258 (LRPLSDNSEQALPPTSSITDPANNIKDNEPQANERHV). A compositionally biased stretch (polar residues) spans 226 to 243 (SDNSEQALPPTSSITDPA). Over residues 247–258 (KDNEPQANERHV) the composition is skewed to basic and acidic residues.

Belongs to the ABC transporter superfamily. Lipoprotein translocase (TC 3.A.1.125) family. In terms of assembly, the complex is composed of two ATP-binding proteins (LolD) and two transmembrane proteins (LolC and LolE).

The protein resides in the cell inner membrane. Part of the ABC transporter complex LolCDE involved in the translocation of mature outer membrane-directed lipoproteins, from the inner membrane to the periplasmic chaperone, LolA. Responsible for the formation of the LolA-lipoprotein complex in an ATP-dependent manner. The polypeptide is Lipoprotein-releasing system ATP-binding protein LolD (Colwellia psychrerythraea (strain 34H / ATCC BAA-681) (Vibrio psychroerythus)).